Reading from the N-terminus, the 454-residue chain is Caspase-9 (454 aa).

The CARD domain maps to 1 to 92 (MDEADRQLLR…GTLASLLQSG (92 aa)). Residue Thr163 is modified to Phosphothreonine; by MAPK1. Tyr191 is subject to Phosphotyrosine; by ABL1. Residues His275 and Cys325 contribute to the active site. Ser340 and Ser348 each carry phosphoserine. A propeptide spanning residues 354–367 (AVPYQEGPRPLDQL) is cleaved from the precursor.

This sequence belongs to the peptidase C14A family. Heterotetramer that consists of two anti-parallel arranged heterodimers, each one formed by a 35 kDa (p35) and a 10 kDa (p10) subunit. Caspase-9 and APAF1 bind to each other via their respective NH2-terminal CED-3 homologous domains in the presence of cytochrome C and ATP. Interacts (inactive form) with EFHD2. Interacts with HAX1. Interacts with BIRC2/c-IAP1, XIAP/BIRC4, BIRC5/survivin, BIRC6/bruce and BIRC7/livin. Interacts with ABL1 (via SH3 domain); the interaction is direct and increased in the response of cells to genotoxic stress and ABL1/c-Abl activation. Interacts with BCL2L10. Post-translationally, cleavages at Asp-353 by granzyme B and at Asp-368 by caspase-3 generate the two active subunits. Caspase-8 and -10 can also be involved in these processing events. In terms of processing, phosphorylated at Thr-163 by MAPK1/ERK2. Phosphorylation at Thr-163 is sufficient to block caspase-9 processing and subsequent caspase-3 activation. Phosphorylation on Tyr-191 by ABL1/c-Abl; occurs in the response of cells to DNA damage. Ubiquitinated by BIRC6; this activity is inhibited by DIABLO/SMAC.

The enzyme catalyses Strict requirement for an Asp residue at position P1 and with a marked preference for His at position P2. It has a preferred cleavage sequence of Leu-Gly-His-Asp-|-Xaa.. With respect to regulation, inhibited by BIRC6; following inhibition of BIRC6-caspase binding by DIABLO/SMAC, BIRC6 is subjected to caspase cleavage, leading to an increase in active caspases. Involved in the activation cascade of caspases responsible for apoptosis execution. Binding of caspase-9 to Apaf-1 leads to activation of the protease which then cleaves and activates effector caspases caspase-3 (CASP3) or caspase-7 (CASP7). Promotes DNA damage-induced apoptosis in a ABL1/c-Abl-dependent manner. Proteolytically cleaves poly(ADP-ribose) polymerase (PARP). Cleaves BIRC6 following inhibition of BIRC6-caspase binding by DIABLO/SMAC. This chain is Caspase-9 (Casp9), found in Mus musculus (Mouse).